A 205-amino-acid polypeptide reads, in one-letter code: Proteasome subunit beta type-3 (205 aa).

S2 is subject to N-acetylserine. Position 77 is an N6-acetyllysine (K77).

Belongs to the peptidase T1B family. The 26S proteasome consists of a 20S proteasome core and two 19S regulatory subunits. The 20S proteasome core is a barrel-shaped complex made of 28 subunits that are arranged in four stacked rings. The two outer rings are each formed by seven alpha subunits, and the two inner rings are formed by seven beta subunits. The proteolytic activity is exerted by three beta-subunits PSMB5, PSMB6 and PSMB7.

Its subcellular location is the cytoplasm. It is found in the nucleus. Its function is as follows. Non-catalytic component of the 20S core proteasome complex involved in the proteolytic degradation of most intracellular proteins. This complex plays numerous essential roles within the cell by associating with different regulatory particles. Associated with two 19S regulatory particles, forms the 26S proteasome and thus participates in the ATP-dependent degradation of ubiquitinated proteins. The 26S proteasome plays a key role in the maintenance of protein homeostasis by removing misfolded or damaged proteins that could impair cellular functions, and by removing proteins whose functions are no longer required. Associated with the PA200 or PA28, the 20S proteasome mediates ubiquitin-independent protein degradation. This type of proteolysis is required in several pathways including spermatogenesis (20S-PA200 complex) or generation of a subset of MHC class I-presented antigenic peptides (20S-PA28 complex). This Rattus norvegicus (Rat) protein is Proteasome subunit beta type-3 (Psmb3).